The following is a 451-amino-acid chain: Phosphoglucosamine mutase (451 aa).

The Phosphoserine intermediate role is filled by S103. Residues S103, D243, D245, and D247 each coordinate Mg(2+). S103 carries the phosphoserine modification.

The protein belongs to the phosphohexose mutase family. Mg(2+) serves as cofactor. Post-translationally, activated by phosphorylation.

The catalysed reaction is alpha-D-glucosamine 1-phosphate = D-glucosamine 6-phosphate. Functionally, catalyzes the conversion of glucosamine-6-phosphate to glucosamine-1-phosphate. This chain is Phosphoglucosamine mutase, found in Lactobacillus johnsonii (strain CNCM I-12250 / La1 / NCC 533).